Reading from the N-terminus, the 339-residue chain is UDP-N-acetylglucosamine--N-acetylmuramyl-(pentapeptide) pyrophosphoryl-undecaprenol N-acetylglucosamine transferase (339 aa).

UDP-N-acetyl-alpha-D-glucosamine is bound by residues 11–13 (TGG), N127, R170, S188, I235, and Q280.

This sequence belongs to the glycosyltransferase 28 family. MurG subfamily.

It is found in the cell inner membrane. The catalysed reaction is di-trans,octa-cis-undecaprenyl diphospho-N-acetyl-alpha-D-muramoyl-L-alanyl-D-glutamyl-meso-2,6-diaminopimeloyl-D-alanyl-D-alanine + UDP-N-acetyl-alpha-D-glucosamine = di-trans,octa-cis-undecaprenyl diphospho-[N-acetyl-alpha-D-glucosaminyl-(1-&gt;4)]-N-acetyl-alpha-D-muramoyl-L-alanyl-D-glutamyl-meso-2,6-diaminopimeloyl-D-alanyl-D-alanine + UDP + H(+). It participates in cell wall biogenesis; peptidoglycan biosynthesis. Functionally, cell wall formation. Catalyzes the transfer of a GlcNAc subunit on undecaprenyl-pyrophosphoryl-MurNAc-pentapeptide (lipid intermediate I) to form undecaprenyl-pyrophosphoryl-MurNAc-(pentapeptide)GlcNAc (lipid intermediate II). This Thermotoga maritima (strain ATCC 43589 / DSM 3109 / JCM 10099 / NBRC 100826 / MSB8) protein is UDP-N-acetylglucosamine--N-acetylmuramyl-(pentapeptide) pyrophosphoryl-undecaprenol N-acetylglucosamine transferase.